The following is a 443-amino-acid chain: Phosphoglucosamine mutase (443 aa).

Residue S101 is the Phosphoserine intermediate of the active site. Mg(2+) is bound by residues S101, D239, D241, and D243. S101 is modified (phosphoserine).

The protein belongs to the phosphohexose mutase family. Mg(2+) is required as a cofactor. In terms of processing, activated by phosphorylation.

The enzyme catalyses alpha-D-glucosamine 1-phosphate = D-glucosamine 6-phosphate. In terms of biological role, catalyzes the conversion of glucosamine-6-phosphate to glucosamine-1-phosphate. The protein is Phosphoglucosamine mutase of Francisella tularensis subsp. holarctica (strain FTNF002-00 / FTA).